A 273-amino-acid polypeptide reads, in one-letter code: Large ribosomal subunit protein uL2 (273 aa).

Disordered regions lie at residues 28-53 and 221-273; these read KPFAPLLEKNSKSGGRNNNGRITTRH and RGTA…RRSK. The span at 39 to 48 shows a compositional bias: low complexity; sequence KSGGRNNNGR. Lysine 242 carries the N6-acetyllysine modification.

Belongs to the universal ribosomal protein uL2 family. Part of the 50S ribosomal subunit. Forms a bridge to the 30S subunit in the 70S ribosome.

One of the primary rRNA binding proteins. Required for association of the 30S and 50S subunits to form the 70S ribosome, for tRNA binding and peptide bond formation. It has been suggested to have peptidyltransferase activity; this is somewhat controversial. Makes several contacts with the 16S rRNA in the 70S ribosome. The protein is Large ribosomal subunit protein uL2 of Shigella dysenteriae serotype 1 (strain Sd197).